The sequence spans 211 residues: Adenylate kinase (211 aa).

An ATP-binding site is contributed by 10–15; sequence GSGKGT. An NMP region spans residues 30–59; that stretch reads STGDLFRENILNSTTLGKEIKKIVEKGELV. AMP contacts are provided by residues Thr-31, Arg-36, 57–59, 85–88, and Gln-92; these read ELV and GFPR. Positions 121–158 are LID; sequence GRRICKSCNNIFNIYTLATKKNGICDVCKGDLYQREDD. Arg-122 contributes to the ATP binding site. Residues Cys-125 and Cys-128 each contribute to the Zn(2+) site. Residue 131-132 participates in ATP binding; that stretch reads IF. Zn(2+)-binding residues include Cys-145 and Cys-148. Residues Arg-155 and Arg-166 each coordinate AMP. Val-194 serves as a coordination point for ATP.

Belongs to the adenylate kinase family. Monomer.

It localises to the cytoplasm. The catalysed reaction is AMP + ATP = 2 ADP. Its pathway is purine metabolism; AMP biosynthesis via salvage pathway; AMP from ADP: step 1/1. Catalyzes the reversible transfer of the terminal phosphate group between ATP and AMP. Plays an important role in cellular energy homeostasis and in adenine nucleotide metabolism. This chain is Adenylate kinase, found in Borrelia garinii subsp. bavariensis (strain ATCC BAA-2496 / DSM 23469 / PBi) (Borreliella bavariensis).